Consider the following 206-residue polypeptide: Small ribosomal subunit protein uS4 (206 aa).

The span at 25 to 39 (DKLLDRKPNGPGKER) shows a compositional bias: basic and acidic residues. The interval 25-49 (DKLLDRKPNGPGKERGARKRGKTSV) is disordered. An S4 RNA-binding domain is found at 95-157 (QRLDNTIYRM…KGIQNLIRHN (63 aa)).

The protein belongs to the universal ribosomal protein uS4 family. Part of the 30S ribosomal subunit. Contacts protein S5. The interaction surface between S4 and S5 is involved in control of translational fidelity.

One of the primary rRNA binding proteins, it binds directly to 16S rRNA where it nucleates assembly of the body of the 30S subunit. In terms of biological role, with S5 and S12 plays an important role in translational accuracy. This is Small ribosomal subunit protein uS4 from Treponema denticola (strain ATCC 35405 / DSM 14222 / CIP 103919 / JCM 8153 / KCTC 15104).